The following is a 134-amino-acid chain: Aspartate 1-decarboxylase (134 aa).

The active-site Schiff-base intermediate with substrate; via pyruvic acid is the Ser-25. A Pyruvic acid (Ser) modification is found at Ser-25. Residue Thr-57 participates in substrate binding. The active-site Proton donor is Tyr-58. Gly-73–Ala-75 is a binding site for substrate.

This sequence belongs to the PanD family. In terms of assembly, heterooctamer of four alpha and four beta subunits. Pyruvate is required as a cofactor. Post-translationally, is synthesized initially as an inactive proenzyme, which is activated by self-cleavage at a specific serine bond to produce a beta-subunit with a hydroxyl group at its C-terminus and an alpha-subunit with a pyruvoyl group at its N-terminus.

It is found in the cytoplasm. The catalysed reaction is L-aspartate + H(+) = beta-alanine + CO2. The protein operates within cofactor biosynthesis; (R)-pantothenate biosynthesis; beta-alanine from L-aspartate: step 1/1. Functionally, catalyzes the pyruvoyl-dependent decarboxylation of aspartate to produce beta-alanine. This chain is Aspartate 1-decarboxylase, found in Mycolicibacterium gilvum (strain PYR-GCK) (Mycobacterium gilvum (strain PYR-GCK)).